The sequence spans 227 residues: Cytochrome c oxidase subunit 2 (227 aa).

Residues 1 to 14 lie on the Mitochondrial intermembrane side of the membrane; it reads MAYPFQLGLQDATS. Residues 15 to 45 traverse the membrane as a helical segment; sequence PIMEELMNFHDHTLMIVFLISTLVLYIISLM. Over 46–59 the chain is Mitochondrial matrix; it reads LTTKLTHTSTMDAQ. A helical membrane pass occupies residues 60–87; sequence EVETIWTILPAVILILIALPSLRILYMM. Over 88-227 the chain is Mitochondrial intermembrane; that stretch reads DEINNPALTV…YFENWSASMI (140 aa). Residues His-161, Cys-196, Glu-198, Cys-200, His-204, and Met-207 each coordinate Cu cation. Glu-198 is a binding site for Mg(2+). At Tyr-218 the chain carries Phosphotyrosine.

It belongs to the cytochrome c oxidase subunit 2 family. In terms of assembly, component of the cytochrome c oxidase (complex IV, CIV), a multisubunit enzyme composed of 14 subunits. The complex is composed of a catalytic core of 3 subunits MT-CO1, MT-CO2 and MT-CO3, encoded in the mitochondrial DNA, and 11 supernumerary subunits COX4I, COX5A, COX5B, COX6A, COX6B, COX6C, COX7A, COX7B, COX7C, COX8 and NDUFA4, which are encoded in the nuclear genome. The complex exists as a monomer or a dimer and forms supercomplexes (SCs) in the inner mitochondrial membrane with NADH-ubiquinone oxidoreductase (complex I, CI) and ubiquinol-cytochrome c oxidoreductase (cytochrome b-c1 complex, complex III, CIII), resulting in different assemblies (supercomplex SCI(1)III(2)IV(1) and megacomplex MCI(2)III(2)IV(2)). Found in a complex with TMEM177, COA6, COX18, COX20, SCO1 and SCO2. Interacts with TMEM177 in a COX20-dependent manner. Interacts with COX20. Interacts with COX16. Cu cation serves as cofactor.

The protein localises to the mitochondrion inner membrane. It carries out the reaction 4 Fe(II)-[cytochrome c] + O2 + 8 H(+)(in) = 4 Fe(III)-[cytochrome c] + 2 H2O + 4 H(+)(out). Functionally, component of the cytochrome c oxidase, the last enzyme in the mitochondrial electron transport chain which drives oxidative phosphorylation. The respiratory chain contains 3 multisubunit complexes succinate dehydrogenase (complex II, CII), ubiquinol-cytochrome c oxidoreductase (cytochrome b-c1 complex, complex III, CIII) and cytochrome c oxidase (complex IV, CIV), that cooperate to transfer electrons derived from NADH and succinate to molecular oxygen, creating an electrochemical gradient over the inner membrane that drives transmembrane transport and the ATP synthase. Cytochrome c oxidase is the component of the respiratory chain that catalyzes the reduction of oxygen to water. Electrons originating from reduced cytochrome c in the intermembrane space (IMS) are transferred via the dinuclear copper A center (CU(A)) of subunit 2 and heme A of subunit 1 to the active site in subunit 1, a binuclear center (BNC) formed by heme A3 and copper B (CU(B)). The BNC reduces molecular oxygen to 2 water molecules using 4 electrons from cytochrome c in the IMS and 4 protons from the mitochondrial matrix. This Maxomys surifer (Indomalayan maxomys) protein is Cytochrome c oxidase subunit 2 (MT-CO2).